A 328-amino-acid polypeptide reads, in one-letter code: Formimidoylglutamase (328 aa).

Residues His-133, Asp-159, His-161, Asp-163, Asp-253, and Asp-255 each contribute to the Mn(2+) site.

The protein belongs to the arginase family. It depends on Mn(2+) as a cofactor.

It carries out the reaction N-formimidoyl-L-glutamate + H2O = formamide + L-glutamate. The protein operates within amino-acid degradation; L-histidine degradation into L-glutamate; L-glutamate from N-formimidoyl-L-glutamate (hydrolase route): step 1/1. Functionally, catalyzes the conversion of N-formimidoyl-L-glutamate to L-glutamate and formamide. This Streptococcus pyogenes serotype M1 protein is Formimidoylglutamase.